A 305-amino-acid polypeptide reads, in one-letter code: Homoserine O-acetyltransferase (305 aa).

The active-site Acyl-thioester intermediate is the C142. The substrate site is built by K163 and S192. H235 acts as the Proton acceptor in catalysis. Residue E237 is part of the active site. R249 serves as a coordination point for substrate.

The protein belongs to the MetA family.

The protein resides in the cytoplasm. It carries out the reaction L-homoserine + acetyl-CoA = O-acetyl-L-homoserine + CoA. The protein operates within amino-acid biosynthesis; L-methionine biosynthesis via de novo pathway; O-acetyl-L-homoserine from L-homoserine: step 1/1. Its function is as follows. Transfers an acetyl group from acetyl-CoA to L-homoserine, forming acetyl-L-homoserine. The protein is Homoserine O-acetyltransferase of Bacteroides fragilis (strain YCH46).